The primary structure comprises 214 residues: Probable adenylyl-sulfate kinase (214 aa).

G13–T20 serves as a coordination point for ATP. The Phosphoserine intermediate role is filled by S87. The segment at W174–A199 is disordered.

The protein belongs to the APS kinase family.

It carries out the reaction adenosine 5'-phosphosulfate + ATP = 3'-phosphoadenylyl sulfate + ADP + H(+). It participates in sulfur metabolism; hydrogen sulfide biosynthesis; sulfite from sulfate: step 2/3. In terms of biological role, catalyzes the synthesis of activated sulfate. The protein is Probable adenylyl-sulfate kinase of Pseudomonas aeruginosa.